A 165-amino-acid chain; its full sequence is Putative protein FAM86C2P (165 aa).

This sequence belongs to the class I-like SAM-binding methyltransferase superfamily. EEF2KMT family.

This chain is Putative protein FAM86C2P (FAM86C2P), found in Homo sapiens (Human).